We begin with the raw amino-acid sequence, 419 residues long: Metacaspase-1B (419 aa).

The disordered stretch occupies residues 1-109 (MYHPNYNYPP…PPMEAQQFGK (109 aa)). The segment covering 33-50 (SPPPPQPYYSNGYPPPSQ) has biased composition (pro residues). Residues 51-66 (SPHSYSPPQYPPHGQY) are compositionally biased toward low complexity. Over residues 82-93 (QYRSYHSHSPSW) the composition is skewed to polar residues. Catalysis depends on residues histidine 210 and cysteine 266.

Belongs to the peptidase C14B family.

Its function is as follows. Involved in cell death (apoptosis). This is Metacaspase-1B (casB) from Aspergillus oryzae (strain ATCC 42149 / RIB 40) (Yellow koji mold).